The chain runs to 504 residues: Heat shock 70 kDa protein 14 (504 aa).

It belongs to the heat shock protein 70 family. As to quaternary structure, component of ribosome-associated complex (RAC).

It localises to the cytoplasm. Its subcellular location is the cytosol. Component of the ribosome-associated complex (RAC), a complex involved in folding or maintaining nascent polypeptides in a folding-competent state. This is Heat shock 70 kDa protein 14 (hspa14) from Danio rerio (Zebrafish).